The following is a 72-amino-acid chain: Translation initiation factor IF-1 (72 aa).

Residues 1–72 (MAKEDVIEVE…TRGRITYRFK (72 aa)) form the S1-like domain.

It belongs to the IF-1 family. As to quaternary structure, component of the 30S ribosomal translation pre-initiation complex which assembles on the 30S ribosome in the order IF-2 and IF-3, IF-1 and N-formylmethionyl-tRNA(fMet); mRNA recruitment can occur at any time during PIC assembly.

Its subcellular location is the cytoplasm. Its function is as follows. One of the essential components for the initiation of protein synthesis. Stabilizes the binding of IF-2 and IF-3 on the 30S subunit to which N-formylmethionyl-tRNA(fMet) subsequently binds. Helps modulate mRNA selection, yielding the 30S pre-initiation complex (PIC). Upon addition of the 50S ribosomal subunit IF-1, IF-2 and IF-3 are released leaving the mature 70S translation initiation complex. The polypeptide is Translation initiation factor IF-1 (Listeria innocua serovar 6a (strain ATCC BAA-680 / CLIP 11262)).